Here is a 187-residue protein sequence, read N- to C-terminus: Ion-translocating oxidoreductase complex subunit B (187 aa).

A hydrophobic region spans residues 1–26 (MTHILFAVLVLALLALAFGIILGFAA). The 4Fe-4S domain maps to 32 to 90 (EADPIVDQLDALLPQTQCGQCGYPGCKPYAEALANGDQINKCVPGGDATMRKIADLMGV). Residues Cys-49, Cys-52, Cys-57, Cys-73, Cys-115, Cys-118, Cys-121, Cys-125, Cys-145, Cys-148, Cys-151, and Cys-155 each coordinate [4Fe-4S] cluster. 4Fe-4S ferredoxin-type domains are found at residues 106 to 135 (KVAF…GATK) and 136 to 165 (AMHT…MIPV).

This sequence belongs to the 4Fe4S bacterial-type ferredoxin family. RnfB subfamily. The complex is composed of six subunits: RnfA, RnfB, RnfC, RnfD, RnfE and RnfG. It depends on [4Fe-4S] cluster as a cofactor.

The protein localises to the cell inner membrane. In terms of biological role, part of a membrane-bound complex that couples electron transfer with translocation of ions across the membrane. The protein is Ion-translocating oxidoreductase complex subunit B of Aeromonas salmonicida (strain A449).